The chain runs to 143 residues: Putative mediator of RNA polymerase II transcription subunit 11 (143 aa).

Residues Ile97 to Asp143 adopt a coiled-coil conformation. The tract at residues Glu109 to Asp143 is disordered. Residues Asn111–Gln136 are compositionally biased toward basic and acidic residues.

This sequence belongs to the Mediator complex subunit 11 family. As to quaternary structure, component of the Mediator complex.

The protein resides in the nucleus. Functionally, component of the Mediator complex, a coactivator involved in the regulated transcription of nearly all RNA polymerase II-dependent genes. Mediator functions as a bridge to convey information from gene-specific regulatory proteins to the basal RNA polymerase II transcription machinery. Mediator is recruited to promoters by direct interactions with regulatory proteins and serves as a scaffold for the assembly of a functional pre-initiation complex with RNA polymerase II and the general transcription factors. This Dictyostelium discoideum (Social amoeba) protein is Putative mediator of RNA polymerase II transcription subunit 11 (med11).